Here is a 230-residue protein sequence, read N- to C-terminus: Ribosome biogenesis protein SLX9 homolog (230 aa).

The span at 1-11 shows a compositional bias: basic residues; it reads MGKVRGLRARV. 2 disordered regions span residues 1 to 42 and 155 to 187; these read MGKV…SAAG and LGLE…AQRQ. The span at 25–38 shows a compositional bias: pro residues; the sequence is GPAPPAPEATPPPA. Thr-34 is modified (phosphothreonine). Over residues 166 to 177 the composition is skewed to basic and acidic residues; it reads RSRESNKPRPSE. At Ser-203 the chain carries Phosphoserine.

This sequence belongs to the SLX9 family. Not detected in any tested tissue.

The protein resides in the nucleus. It localises to the nucleolus. May be involved in ribosome biogenesis. This Homo sapiens (Human) protein is Ribosome biogenesis protein SLX9 homolog.